The chain runs to 452 residues: MEKQYLTVTALTRYIKTKIEYDPHLQSVWLKGEISNFKNHSRGHMYFTLKDENARIAAVMFAGHNRNIKFRPENGMKVLVKGKISVYEASGSYQIYIQDMQPDGVGNLHLAYEQLKVRLEEEGLFSQVYKKTIPPYAKTIGVITSPTGAAIRDIITTIKRRYPIGNVIVFPVLVQGESAAPSIVQAIRTANEMEGIDVLIVGRGGGSIEELWAFNEEMVARAIFKSEIPIISAVGHETDFTIADFVADLRAPTPTAAAELAAPNIIELQEKVLQRTLRLQRAMRELVHKKEEKLQVLQKSYAFRYPRQVYEQKEEQLDRALEQLVLAKERYIDKKVNQLKQLSFYLEKHHPSQKIMQTKVAVETLQKQLQREMQTLLQTKEFAFVRAAQKLEALSPLKVMMRGYGLVYDEEKQVLKSVKDVSLGDAVSVQLQDGILDCSVSGIEERELNNGK.

Belongs to the XseA family. In terms of assembly, heterooligomer composed of large and small subunits.

It localises to the cytoplasm. The catalysed reaction is Exonucleolytic cleavage in either 5'- to 3'- or 3'- to 5'-direction to yield nucleoside 5'-phosphates.. Bidirectionally degrades single-stranded DNA into large acid-insoluble oligonucleotides, which are then degraded further into small acid-soluble oligonucleotides. The sequence is that of Exodeoxyribonuclease 7 large subunit from Bacillus cereus (strain ATCC 10987 / NRS 248).